The sequence spans 431 residues: UDP-N-acetylmuramate--L-alanine ligase (431 aa).

An ATP-binding site is contributed by 108-114 (GAHGKST).

Belongs to the MurCDEF family.

The protein localises to the cytoplasm. It catalyses the reaction UDP-N-acetyl-alpha-D-muramate + L-alanine + ATP = UDP-N-acetyl-alpha-D-muramoyl-L-alanine + ADP + phosphate + H(+). It participates in cell wall biogenesis; peptidoglycan biosynthesis. Its function is as follows. Cell wall formation. This is UDP-N-acetylmuramate--L-alanine ligase from Campylobacter jejuni (strain RM1221).